The following is a 535-amino-acid chain: L-aspartate oxidase (535 aa).

FAD is bound by residues 16–19 (SGAA), lysine 38, 45–52 (ATFYAQGG), and aspartate 223. Arginine 290 functions as the Proton donor/acceptor in the catalytic mechanism. Residues glutamate 375 and 391 to 392 (SL) each bind FAD.

The protein belongs to the FAD-dependent oxidoreductase 2 family. NadB subfamily. Requires FAD as cofactor.

Its subcellular location is the cytoplasm. The catalysed reaction is L-aspartate + O2 = iminosuccinate + H2O2. The protein operates within cofactor biosynthesis; NAD(+) biosynthesis; iminoaspartate from L-aspartate (oxidase route): step 1/1. Catalyzes the oxidation of L-aspartate to iminoaspartate, the first step in the de novo biosynthesis of NAD(+). The chain is L-aspartate oxidase (nadB) from Vibrio cholerae serotype O1 (strain ATCC 39315 / El Tor Inaba N16961).